A 227-amino-acid polypeptide reads, in one-letter code: N-acetyltransferase 8B (227 aa).

Residues 1–42 (MAPYHIRKYQESDRKSVVGLLSGGMAEHAPATFRRLLKLPRT) are Cytoplasmic-facing. The helical; Signal-anchor for type II membrane protein transmembrane segment at 43 to 63 (LILLLGGALALLLVSGSWILA) threads the bilayer. Residues 61 to 214 (ILALVFSLSL…ARLVDLHTVH (154 aa)) form the N-acetyltransferase domain. At 64–227 (LVFSLSLLPA…HLPSAQAGRL (164 aa)) the chain is on the lumenal side. N6-acetyllysine is present on lysine 99.

This sequence belongs to the NAT8 family. In terms of processing, acetylation on Lys-99 modulates enzymatic activity.

Its subcellular location is the endoplasmic reticulum-Golgi intermediate compartment membrane. The protein resides in the endoplasmic reticulum membrane. The catalysed reaction is L-lysyl-[protein] + acetyl-CoA = N(6)-acetyl-L-lysyl-[protein] + CoA + H(+). Its activity is regulated as follows. Allosterically regulated by acetylation at residue Lys-99. In terms of biological role, endoplasmic reticulum (ER)-membrane-bound lysine N-acetyltransferase catalyzing the N6-acetylation of lysine residues in the lumen of the ER in various proteins, including PROM1 and BACE1, using acetyl-CoA as acetyl donor. Thereby, may regulate apoptosis through the acetylation and the regulation of the expression of PROM1. Acetylates and stabilizes BACE1 immature protein, leading to increased steady-state levels in neurons. By acting on BACE1 expression, may regulate amyloid beta-peptide formation. N(6)-lysine acetylation in ER maintains protein homeostasis and regulates reticulophagy. The polypeptide is N-acetyltransferase 8B (Homo sapiens (Human)).